Consider the following 744-residue polypeptide: Polyribonucleotide nucleotidyltransferase (744 aa).

Residues D487 and D493 each coordinate Mg(2+). In terms of domain architecture, KH spans 554-613; that stretch reads PSTTTLKVDKDKIRDIIGPGGKVIKEICETSGAKIDISDDGTVSIYASDKDKLKVALDKV. The S1 motif domain maps to 623–691; sequence GEVFNGTVMK…NKGKAKLTIK (69 aa). Residues 691-744 form a disordered region; that stretch reads KNAEKDKSSANPKPKNSPKEHQEPEKRDNGKKRAWNEDNNAETTEVVTERKYFS. The span at 707–718 shows a compositional bias: basic and acidic residues; the sequence is SPKEHQEPEKRD. Polar residues predominate over residues 727 to 736; the sequence is EDNNAETTEV.

This sequence belongs to the polyribonucleotide nucleotidyltransferase family. Requires Mg(2+) as cofactor.

Its subcellular location is the cytoplasm. It catalyses the reaction RNA(n+1) + phosphate = RNA(n) + a ribonucleoside 5'-diphosphate. Involved in mRNA degradation. Catalyzes the phosphorolysis of single-stranded polyribonucleotides processively in the 3'- to 5'-direction. The polypeptide is Polyribonucleotide nucleotidyltransferase (Rickettsia bellii (strain OSU 85-389)).